The following is a 124-amino-acid chain: Fluoride-specific ion channel FluC 2 (124 aa).

4 helical membrane-spanning segments follow: residues L9 to L29, D34 to V54, L67 to L87, and L99 to L119. G77 and T80 together coordinate Na(+).

This sequence belongs to the fluoride channel Fluc/FEX (TC 1.A.43) family.

It localises to the cell membrane. The enzyme catalyses fluoride(in) = fluoride(out). With respect to regulation, na(+) is not transported, but it plays an essential structural role and its presence is essential for fluoride channel function. Its function is as follows. Fluoride-specific ion channel. Important for reducing fluoride concentration in the cell, thus reducing its toxicity. This is Fluoride-specific ion channel FluC 2 from Streptococcus pneumoniae serotype 4 (strain ATCC BAA-334 / TIGR4).